The chain runs to 495 residues: Cytochrome P450 monooxygenase 88 (495 aa).

The chain crosses the membrane as a helical span at residues 2–22 (FLQIVTSVLATGLLYALISVL). N-linked (GlcNAc...) asparagine glycans are attached at residues N25 and N198. C428 contacts heme.

The protein belongs to the cytochrome P450 family. The cofactor is heme.

The protein localises to the membrane. It participates in secondary metabolite biosynthesis. Cytochrome P450 monooxygenase that is able to use 4-ethoxybenzoic acid as a substrate for oxidation. This chain is Cytochrome P450 monooxygenase 88, found in Postia placenta (strain ATCC 44394 / Madison 698-R) (Brown rot fungus).